Reading from the N-terminus, the 458-residue chain is tRNA modification GTPase MnmE (458 aa).

Residues Arg-22, Glu-84, and Arg-123 each contribute to the (6S)-5-formyl-5,6,7,8-tetrahydrofolate site. Positions 220 to 379 (GISTAIIGRP…LEKAIADLFF (160 aa)) constitute a TrmE-type G domain. Asn-230 provides a ligand contact to K(+). Residues 230–235 (NVGKSS), 249–255 (TDIAGTT), and 274–277 (DTAG) each bind GTP. Ser-234 lines the Mg(2+) pocket. Residues Thr-249, Ile-251, and Thr-254 each coordinate K(+). Mg(2+) is bound at residue Thr-255. Lys-458 serves as a coordination point for (6S)-5-formyl-5,6,7,8-tetrahydrofolate.

This sequence belongs to the TRAFAC class TrmE-Era-EngA-EngB-Septin-like GTPase superfamily. TrmE GTPase family. In terms of assembly, homodimer. Heterotetramer of two MnmE and two MnmG subunits. Requires K(+) as cofactor.

It localises to the cytoplasm. Exhibits a very high intrinsic GTPase hydrolysis rate. Involved in the addition of a carboxymethylaminomethyl (cmnm) group at the wobble position (U34) of certain tRNAs, forming tRNA-cmnm(5)s(2)U34. The sequence is that of tRNA modification GTPase MnmE from Bacillus mycoides (strain KBAB4) (Bacillus weihenstephanensis).